Consider the following 432-residue polypeptide: Glutamyl-tRNA reductase (432 aa).

Substrate-binding positions include 55 to 58 (TCNR), Ser-114, 119 to 121 (ETQ), and Gln-125. Cys-56 functions as the Nucleophile in the catalytic mechanism. 194–199 (GAGEMI) lines the NADP(+) pocket.

It belongs to the glutamyl-tRNA reductase family. As to quaternary structure, homodimer.

The enzyme catalyses (S)-4-amino-5-oxopentanoate + tRNA(Glu) + NADP(+) = L-glutamyl-tRNA(Glu) + NADPH + H(+). Its pathway is porphyrin-containing compound metabolism; protoporphyrin-IX biosynthesis; 5-aminolevulinate from L-glutamyl-tRNA(Glu): step 1/2. In terms of biological role, catalyzes the NADPH-dependent reduction of glutamyl-tRNA(Glu) to glutamate 1-semialdehyde (GSA). This chain is Glutamyl-tRNA reductase, found in Burkholderia multivorans (strain ATCC 17616 / 249).